Here is a 995-residue protein sequence, read N- to C-terminus: Integrator complex subunit 8 (995 aa).

Position 18 is a phosphothreonine (threonine 18). The short motif at tryptophan 24–leucine 29 is the WFEF motif element. TPR repeat units lie at residues cysteine 250 to isoleucine 288, serine 320 to valine 356, valine 570 to phenylalanine 603, and histidine 833 to phenylalanine 866.

Belongs to the Integrator subunit 8 family. As to quaternary structure, component of the Integrator complex, composed of core subunits INTS1, INTS2, INTS3, INTS4, INTS5, INTS6, INTS7, INTS8, INTS9/RC74, INTS10, INTS11/CPSF3L, INTS12, INTS13, INTS14 and INTS15. The core complex associates with protein phosphatase 2A subunits PPP2CA and PPP2R1A, to form the Integrator-PP2A (INTAC) complex.

It localises to the nucleus. It is found in the chromosome. Its function is as follows. Component of the integrator complex, a multiprotein complex that terminates RNA polymerase II (Pol II) transcription in the promoter-proximal region of genes. The integrator complex provides a quality checkpoint during transcription elongation by driving premature transcription termination of transcripts that are unfavorably configured for transcriptional elongation: the complex terminates transcription by (1) catalyzing dephosphorylation of the C-terminal domain (CTD) of Pol II subunit POLR2A/RPB1 and SUPT5H/SPT5, (2) degrading the exiting nascent RNA transcript via endonuclease activity and (3) promoting the release of Pol II from bound DNA. The integrator complex is also involved in terminating the synthesis of non-coding Pol II transcripts, such as enhancer RNAs (eRNAs), small nuclear RNAs (snRNAs), telomerase RNAs and long non-coding RNAs (lncRNAs). Within the integrator complex, INTS8 is required for the recruitment of protein phosphatase 2A (PP2A) to transcription pause-release checkpoint. The sequence is that of Integrator complex subunit 8 (Ints8) from Mus musculus (Mouse).